The sequence spans 221 residues: Deoxyribose-phosphate aldolase (221 aa).

Aspartate 90 acts as the Proton donor/acceptor in catalysis. Lysine 152 serves as the catalytic Schiff-base intermediate with acetaldehyde. Lysine 181 (proton donor/acceptor) is an active-site residue.

This sequence belongs to the DeoC/FbaB aldolase family. DeoC type 1 subfamily.

Its subcellular location is the cytoplasm. The enzyme catalyses 2-deoxy-D-ribose 5-phosphate = D-glyceraldehyde 3-phosphate + acetaldehyde. It participates in carbohydrate degradation; 2-deoxy-D-ribose 1-phosphate degradation; D-glyceraldehyde 3-phosphate and acetaldehyde from 2-deoxy-alpha-D-ribose 1-phosphate: step 2/2. Catalyzes a reversible aldol reaction between acetaldehyde and D-glyceraldehyde 3-phosphate to generate 2-deoxy-D-ribose 5-phosphate. This Syntrophotalea carbinolica (strain DSM 2380 / NBRC 103641 / GraBd1) (Pelobacter carbinolicus) protein is Deoxyribose-phosphate aldolase.